The sequence spans 948 residues: Phosphatidylinositol-glycan-specific phospholipase D (948 aa).

Positions 1–24 are cleaved as a signal peptide; sequence MKNKIILLWLLLIVILCTISNVKG. 8 N-linked (GlcNAc...) asparagine glycosylation sites follow: Asn39, Asn78, Asn148, Asn300, Asn433, Asn452, Asn506, and Asn535. FG-GAP repeat units lie at residues 451–512, 526–588, 596–656, and 663–724; these read TNFT…SVTI, QVAT…NPAG, LPSI…RISG, and DADY…LNSF. Asn749 and Asn788 each carry an N-linked (GlcNAc...) asparagine glycan. FG-GAP repeat units lie at residues 799 to 861 and 895 to 948; these read NLLL…LTND and SSGG…NIFQ.

Belongs to the GPLD1 family. The cofactor is Ca(2+).

It localises to the secreted. The catalysed reaction is a 6-(alpha-D-glucosaminyl)-1-(1,2-diacyl-sn-glycero-3-phospho)-1D-myo-inositol + H2O = 6-(alpha-D-glucosaminyl)-1D-myo-inositol + a 1,2-diacyl-sn-glycero-3-phosphate + H(+). In terms of biological role, hydrolyzes the inositol phosphate linkage in proteins anchored by phosphatidylinositol glycans (GPI-anchor) thus releasing these proteins from the membrane. May also cleave GPI anchor intermediates intracellularly. This is Phosphatidylinositol-glycan-specific phospholipase D (pldG) from Dictyostelium discoideum (Social amoeba).